Reading from the N-terminus, the 157-residue chain is 6,7-dimethyl-8-ribityllumazine synthase (157 aa).

5-amino-6-(D-ribitylamino)uracil contacts are provided by residues F24, 58-60, and 82-84; these read SFE and AVI. 87 to 88 contacts (2S)-2-hydroxy-3-oxobutyl phosphate; sequence ET. H90 serves as the catalytic Proton donor. F115 is a binding site for 5-amino-6-(D-ribitylamino)uracil. A (2S)-2-hydroxy-3-oxobutyl phosphate-binding site is contributed by R129.

The protein belongs to the DMRL synthase family.

It catalyses the reaction (2S)-2-hydroxy-3-oxobutyl phosphate + 5-amino-6-(D-ribitylamino)uracil = 6,7-dimethyl-8-(1-D-ribityl)lumazine + phosphate + 2 H2O + H(+). It functions in the pathway cofactor biosynthesis; riboflavin biosynthesis; riboflavin from 2-hydroxy-3-oxobutyl phosphate and 5-amino-6-(D-ribitylamino)uracil: step 1/2. Catalyzes the formation of 6,7-dimethyl-8-ribityllumazine by condensation of 5-amino-6-(D-ribitylamino)uracil with 3,4-dihydroxy-2-butanone 4-phosphate. This is the penultimate step in the biosynthesis of riboflavin. The polypeptide is 6,7-dimethyl-8-ribityllumazine synthase (Thermus thermophilus (strain ATCC BAA-163 / DSM 7039 / HB27)).